A 442-amino-acid polypeptide reads, in one-letter code: GTPase Der (442 aa).

EngA-type G domains lie at 2 to 167 (RTIA…PIQN) and 175 to 351 (FKFC…EQAM). GTP-binding positions include 8–15 (GKPNVGKS), 55–59 (DTGGI), 119–122 (NKVE), 181–188 (GRPNVGKS), 228–232 (DTAGV), and 293–296 (NKWD). The KH-like domain occupies 352 to 436 (RKVATSLLND…PITLYWQDKN (85 aa)).

This sequence belongs to the TRAFAC class TrmE-Era-EngA-EngB-Septin-like GTPase superfamily. EngA (Der) GTPase family. As to quaternary structure, associates with the 50S ribosomal subunit.

In terms of biological role, GTPase that plays an essential role in the late steps of ribosome biogenesis. The chain is GTPase Der from Ureaplasma urealyticum serovar 10 (strain ATCC 33699 / Western).